Consider the following 158-residue polypeptide: Sec-independent protein translocase protein TatB (158 aa).

A helical transmembrane segment spans residues 1 to 21 (MFGISFSELLLVGLVALLVLG). Positions 73–158 (DEARKMFAPN…HDSSLPPRAP (86 aa)) are disordered. A compositionally biased stretch (low complexity) spans 80-90 (APNQPSENSPE).

This sequence belongs to the TatB family. As to quaternary structure, the Tat system comprises two distinct complexes: a TatABC complex, containing multiple copies of TatA, TatB and TatC subunits, and a separate TatA complex, containing only TatA subunits. Substrates initially bind to the TatABC complex, which probably triggers association of the separate TatA complex to form the active translocon.

It is found in the cell inner membrane. In terms of biological role, part of the twin-arginine translocation (Tat) system that transports large folded proteins containing a characteristic twin-arginine motif in their signal peptide across membranes. Together with TatC, TatB is part of a receptor directly interacting with Tat signal peptides. TatB may form an oligomeric binding site that transiently accommodates folded Tat precursor proteins before their translocation. This Pseudomonas syringae pv. syringae (strain B728a) protein is Sec-independent protein translocase protein TatB.